The following is a 545-amino-acid chain: Glucose-6-phosphate isomerase (545 aa).

Glu-351 serves as the catalytic Proton donor. Active-site residues include His-382 and Lys-510.

It belongs to the GPI family.

It localises to the cytoplasm. It catalyses the reaction alpha-D-glucose 6-phosphate = beta-D-fructose 6-phosphate. Its pathway is carbohydrate biosynthesis; gluconeogenesis. It functions in the pathway carbohydrate degradation; glycolysis; D-glyceraldehyde 3-phosphate and glycerone phosphate from D-glucose: step 2/4. Catalyzes the reversible isomerization of glucose-6-phosphate to fructose-6-phosphate. In Helicobacter pylori (strain ATCC 700392 / 26695) (Campylobacter pylori), this protein is Glucose-6-phosphate isomerase.